The primary structure comprises 517 residues: Protein NETWORKED 4B (517 aa).

Disordered regions lie at residues 1–29 (MASS…DSHN) and 101–159 (LQKN…EDGD). The span at 10-21 (KQFKRSMTKKSH) shows a compositional bias: basic residues. The NAB domain maps to 21-101 (HSWWWDSHNC…ERYDQASGEL (81 aa)). Over residues 107-119 (SEIQSQSSLEISS) the composition is skewed to low complexity. The span at 121 to 135 (TKEKLSRRQSSHKEE) shows a compositional bias: basic and acidic residues. Positions 156-486 (EDGDEALIRR…EQKREAIRQL (331 aa)) form a coiled coil.

This sequence belongs to the NET family.

Plant-specific actin binding protein. May be part of a membrane-cytoskeletal adapter complex. The sequence is that of Protein NETWORKED 4B from Arabidopsis thaliana (Mouse-ear cress).